The primary structure comprises 422 residues: Imidazolonepropionase (422 aa).

Fe(3+)-binding residues include H82 and H84. Zn(2+)-binding residues include H82 and H84. Residues R91, Y154, and H187 each contribute to the 4-imidazolone-5-propanoate site. Y154 is a binding site for N-formimidoyl-L-glutamate. Position 252 (H252) interacts with Fe(3+). H252 provides a ligand contact to Zn(2+). Residue E255 participates in 4-imidazolone-5-propanoate binding. Residue D327 coordinates Fe(3+). Residue D327 coordinates Zn(2+). N-formimidoyl-L-glutamate is bound by residues N329 and G331. Residue S332 participates in 4-imidazolone-5-propanoate binding.

The protein belongs to the metallo-dependent hydrolases superfamily. HutI family. Requires Zn(2+) as cofactor. It depends on Fe(3+) as a cofactor.

Its subcellular location is the cytoplasm. It catalyses the reaction 4-imidazolone-5-propanoate + H2O = N-formimidoyl-L-glutamate. It functions in the pathway amino-acid degradation; L-histidine degradation into L-glutamate; N-formimidoyl-L-glutamate from L-histidine: step 3/3. Catalyzes the hydrolytic cleavage of the carbon-nitrogen bond in imidazolone-5-propanoate to yield N-formimidoyl-L-glutamate. It is the third step in the universal histidine degradation pathway. The polypeptide is Imidazolonepropionase (Alkaliphilus oremlandii (strain OhILAs) (Clostridium oremlandii (strain OhILAs))).